Reading from the N-terminus, the 79-residue chain is Acyl carrier protein (79 aa).

The 76-residue stretch at 2–77 (SEIADKVKKI…DAIDYIEKQK (76 aa)) folds into the Carrier domain. Residue Ser-37 is modified to O-(pantetheine 4'-phosphoryl)serine.

This sequence belongs to the acyl carrier protein (ACP) family. In terms of processing, 4'-phosphopantetheine is transferred from CoA to a specific serine of apo-ACP by AcpS. This modification is essential for activity because fatty acids are bound in thioester linkage to the sulfhydryl of the prosthetic group.

It is found in the cytoplasm. The protein operates within lipid metabolism; fatty acid biosynthesis. Functionally, carrier of the growing fatty acid chain in fatty acid biosynthesis. The polypeptide is Acyl carrier protein (Gluconacetobacter diazotrophicus (strain ATCC 49037 / DSM 5601 / CCUG 37298 / CIP 103539 / LMG 7603 / PAl5)).